The chain runs to 445 residues: 23S rRNA (uracil(1939)-C(5))-methyltransferase RlmD (445 aa).

Positions 12–70 (SKQLSSKLSLKVTQLDHLGAGIAHHDGKIVFINGALPGETVSVQLTEQKKKFARAKLLK) constitute a TRAM domain. [4Fe-4S] cluster is bound by residues C83, C89, C92, and C171. 6 residues coordinate S-adenosyl-L-methionine: Q278, F307, N312, E328, D355, and D375. Catalysis depends on C401, which acts as the Nucleophile.

The protein belongs to the class I-like SAM-binding methyltransferase superfamily. RNA M5U methyltransferase family. RlmD subfamily.

It carries out the reaction uridine(1939) in 23S rRNA + S-adenosyl-L-methionine = 5-methyluridine(1939) in 23S rRNA + S-adenosyl-L-homocysteine + H(+). Its function is as follows. Catalyzes the formation of 5-methyl-uridine at position 1939 (m5U1939) in 23S rRNA. The chain is 23S rRNA (uracil(1939)-C(5))-methyltransferase RlmD from Shewanella halifaxensis (strain HAW-EB4).